The primary structure comprises 128 residues: Fluoride-specific ion channel FluC (128 aa).

The next 4 helical transmembrane spans lie at 10–30, 40–60, 71–91, and 102–122; these read FLAV…AGLW, TLLV…VLLA, AAVT…AETV, and ALGY…LGLA. Na(+) is bound by residues G78 and T81.

The protein belongs to the fluoride channel Fluc/FEX (TC 1.A.43) family.

It is found in the cell inner membrane. It catalyses the reaction fluoride(in) = fluoride(out). Its activity is regulated as follows. Na(+) is not transported, but it plays an essential structural role and its presence is essential for fluoride channel function. Fluoride-specific ion channel. Important for reducing fluoride concentration in the cell, thus reducing its toxicity. In Bordetella petrii (strain ATCC BAA-461 / DSM 12804 / CCUG 43448), this protein is Fluoride-specific ion channel FluC.